The sequence spans 209 residues: Endonuclease III (209 aa).

The region spanning 108-127 (RTELESLPGVGRKTANIILN) is the HhH domain. Residues C187, C194, C197, and C203 each coordinate [4Fe-4S] cluster.

It belongs to the Nth/MutY family. It depends on [4Fe-4S] cluster as a cofactor.

The enzyme catalyses 2'-deoxyribonucleotide-(2'-deoxyribose 5'-phosphate)-2'-deoxyribonucleotide-DNA = a 3'-end 2'-deoxyribonucleotide-(2,3-dehydro-2,3-deoxyribose 5'-phosphate)-DNA + a 5'-end 5'-phospho-2'-deoxyribonucleoside-DNA + H(+). Its function is as follows. DNA repair enzyme that has both DNA N-glycosylase activity and AP-lyase activity. The DNA N-glycosylase activity releases various damaged pyrimidines from DNA by cleaving the N-glycosidic bond, leaving an AP (apurinic/apyrimidinic) site. The AP-lyase activity cleaves the phosphodiester bond 3' to the AP site by a beta-elimination, leaving a 3'-terminal unsaturated sugar and a product with a terminal 5'-phosphate. This is Endonuclease III from Buchnera aphidicola subsp. Schizaphis graminum (strain Sg).